The sequence spans 1115 residues: Receptor-type tyrosine-protein phosphatase H (1115 aa).

The N-terminal stretch at 1 to 27 (MAGAGGGLGVWGNLVLLGLCSWTGARA) is a signal peptide. The Extracellular segment spans residues 28-754 (PAPNPGRNLT…VVCHTESAGV (727 aa)). 8 Fibronectin type-III domains span residues 32 to 121 (PGRN…APNP), 122 to 209 (VRNL…TAHN), 210 to 299 (PVRN…APNP), 300 to 387 (VRNL…TAPN), 388 to 477 (PVRN…VPNA), 478 to 563 (VTSL…TAAT), 564 to 666 (APNE…TYPD), and 665 to 749 (PDTV…VCHT). N-linked (GlcNAc...) asparagine glycosylation is found at Asn-35, Asn-83, Asn-172, Asn-256, Asn-285, Asn-350, Asn-434, Asn-468, Asn-556, and Asn-642. The chain crosses the membrane as a helical span at residues 755 to 775 (IAGAFVGILLFLILVGLLIFF). Residues 776–1115 (LKRRNKKKQQ…AAIQAHKLEV (340 aa)) are Cytoplasmic-facing. Positions 820-1079 (FADEYQQLSL…VFLHQCILRF (260 aa)) constitute a Tyrosine-protein phosphatase domain. Cys-1020 functions as the Phosphocysteine intermediate in the catalytic mechanism. Phosphotyrosine is present on residues Tyr-1094 and Tyr-1102.

This sequence belongs to the protein-tyrosine phosphatase family. Receptor class 3 subfamily. Homodimer; disulfide-linked. Interacts with LCK. Interacts (phosphorylated form) with GRB2 (via SH2 domain). Interacts (phosphorylated form) with FYN (via SH2 domain). Interacts (via extracellular domain) with CEACAM20 (via extracellular domain); the interaction dephosphorylates CEACAM20. As to expression, expressed at high levels in the brain, spleen and liver and at lower levels in the heart and stomach. Expressed in pancreatic and colorectal cancer cells, but not in normal pancreas or colon. Expression in hepatocellular carcinoma is related to the differentiation status of the tumor and expression is inversely related to tumor aggressiveness.

It is found in the cell projection. Its subcellular location is the microvillus membrane. The protein localises to the apical cell membrane. It localises to the cytoplasm. The catalysed reaction is O-phospho-L-tyrosyl-[protein] + H2O = L-tyrosyl-[protein] + phosphate. With respect to regulation, regulated by reversible dimerization. Dimerization reduces its catalytic activity. Functionally, protein phosphatase that may contribute to contact inhibition of cell growth and motility by mediating the dephosphorylation of focal adhesion-associated substrates and thus negatively regulating integrin-promoted signaling processes. Induces apoptotic cell death by at least two distinct mechanisms: inhibition of cell survival signaling mediated by PI 3-kinase, Akt, and ILK and activation of a caspase-dependent proapoptotic pathway. Inhibits the basal activity of LCK and its activation in response to TCR stimulation and TCR-induced activation of MAP kinase and surface expression of CD69. Inhibits TCR-induced tyrosine phosphorylation of LAT and ZAP70. Inhibits both basal activity of DOK1 and its CD2-induced tyrosine phosphorylation. Induces dephosphorylation of BCAR1, focal adhesion kinase and SRC. Reduces migratory activity of activity of Jurkat cells. Reduces tyrosine phosphorylation of CEACAM20 and thereby contributes to suppress the intestinal immune response CEACAM20. This chain is Receptor-type tyrosine-protein phosphatase H (PTPRH), found in Homo sapiens (Human).